The primary structure comprises 135 residues: Cytochrome c-type biogenesis protein CcmE (135 aa).

At 1 to 8 (MLLLRWKR) the chain is on the cytoplasmic side. Residues 9 to 29 (FWFLSLGILLFSGVVSLMLFN) traverse the membrane as a helical; Signal-anchor for type II membrane protein segment. Residues 30 to 135 (LSESISFFYL…EDFIKSVRGE (106 aa)) lie on the Periplasmic side of the membrane. Residues His-118 and Tyr-122 each coordinate heme.

This sequence belongs to the CcmE/CycJ family.

The protein localises to the cell inner membrane. Functionally, heme chaperone required for the biogenesis of c-type cytochromes. Transiently binds heme delivered by CcmC and transfers the heme to apo-cytochromes in a process facilitated by CcmF and CcmH. The sequence is that of Cytochrome c-type biogenesis protein CcmE from Neorickettsia sennetsu (strain ATCC VR-367 / Miyayama) (Ehrlichia sennetsu).